We begin with the raw amino-acid sequence, 254 residues long: Emerin (254 aa).

Met-1 carries the post-translational modification N-acetylmethionine. In terms of domain architecture, LEM spans 1–45; that stretch reads MDNYADLSDTELTTLLRRYNIPHGPVVGSTRRLYEKKIFEYETQR. A phosphoserine mark is found at Ser-8 and Ser-29. Positions 46–222 are interaction with F-actin; that stretch reads RRLSPPSSSA…PGAGLGQDRQ (177 aa). Ser-49 bears the Phosphoserine; by PKA mark. 7 positions are modified to phosphoserine: Ser-54, Ser-60, Ser-87, Ser-98, Ser-141, Ser-142, and Ser-143. Tyr-161 carries the post-translational modification Phosphotyrosine. The segment at 168–186 is interaction with CTNNB1; the sequence is RPVSASRSSLDLSYYPTSS. 3 positions are modified to phosphoserine: Ser-171, Ser-173, and Ser-175. A helical membrane pass occupies residues 223-243; the sequence is VPLWGQLLLFLVFVIVLFFIY.

As to quaternary structure, interacts with lamins A and C, BANF1, GMCL, BCLAF1 and YTHDC1/YT521. Interacts with TMEM43; the interaction retains emerin in the nuclear inner membrane. Interacts with SUN1 and SUN2. Interacts with ACTB, SPTAN1, F-actin, CTNNB1 and beta-tubulin. Interacts with TMEM201. Interacts with NEMP1. Found in four different phosphorylated forms, three of which appear to be associated with the cell cycle. As to expression, skeletal muscle, heart, colon, testis, ovary and pancreas.

It is found in the nucleus inner membrane. The protein resides in the nucleus outer membrane. Functionally, stabilizes and promotes the formation of a nuclear actin cortical network. Stimulates actin polymerization in vitro by binding and stabilizing the pointed end of growing filaments. Inhibits beta-catenin activity by preventing its accumulation in the nucleus. Acts by influencing the nuclear accumulation of beta-catenin through a CRM1-dependent export pathway. Links centrosomes to the nuclear envelope via a microtubule association. Required for proper localization of non-farnesylated prelamin-A/C. Together with NEMP1, contributes to nuclear envelope stiffness in germ cells. EMD and BAF are cooperative cofactors of HIV-1 infection. Association of EMD with the viral DNA requires the presence of BAF and viral integrase. The association of viral DNA with chromatin requires the presence of BAF and EMD. The polypeptide is Emerin (EMD) (Homo sapiens (Human)).